The chain runs to 320 residues: Nicotianamine synthase 2 (320 aa).

It belongs to the nicotianamine synthase (NAS)-like family.

It catalyses the reaction 3 S-adenosyl-L-methionine = nicotianamine + 3 S-methyl-5'-thioadenosine + 3 H(+). Its function is as follows. Synthesizes nicotianamine, a polyamine which serves as a sensor for the physiological iron status within the plant, and/or might be involved in the transport of iron. The protein is Nicotianamine synthase 2 (NAS2) of Arabidopsis thaliana (Mouse-ear cress).